Reading from the N-terminus, the 450-residue chain is Large terminase protein homolog UL15b (450 aa).

Belongs to the herpesviridae large terminase family.

This Psittacid herpesvirus 1 (isolate Amazon parrot/-/97-0001/1997) (PsHV-1) protein is Large terminase protein homolog UL15b (UL15b).